The sequence spans 287 residues: Zinc transporter ZIP9 (287 aa).

A helical membrane pass occupies residues 4 to 24; the sequence is FLSISLLSLAMLVGCYVAGII. N-linked (GlcNAc...) asparagine glycosylation occurs at N29. 5 helical membrane passes run 35 to 55, 107 to 127, 147 to 167, 177 to 197, and 211 to 231; these read LKLV…AVIV, AYIG…DQIG, ITTT…LGAA, LIVF…LVSF, and HLLV…LGLS. N-linked (GlcNAc...) asparagine glycosylation is present at N242. Residues 245–265 form a helical membrane-spanning segment; it reads GVAMLFSAGTFLYVATVHVLP. The interval 268–287 is disordered; it reads TSTNQSGSSLSPRPLPSGKN. N271 carries N-linked (GlcNAc...) asparagine glycosylation. Residues 273 to 287 are compositionally biased toward low complexity; sequence SGSSLSPRPLPSGKN.

It belongs to the ZIP transporter (TC 2.A.5) family.

Its subcellular location is the golgi apparatus. It is found in the trans-Golgi network membrane. It localises to the cell membrane. The protein localises to the cytoplasm. The protein resides in the perinuclear region. Its subcellular location is the mitochondrion. It is found in the nucleus. It carries out the reaction Zn(2+)(in) = Zn(2+)(out). Transports zinc ions across cell and organelle membranes into the cytoplasm and regulates intracellular zinc homeostasis. Participates in the zinc ions efflux out of the secretory compartments. Regulates intracellular zinc level, resulting in the enhancement of AKT1 and MAPK3/MAPK1 (Erk1/2) phosphorylation in response to the BCR activation. Also functions as a membrane androgen receptor that mediates, through a G protein, the non-classical androgen signaling pathway, characterized by the activation of MAPK3/MAPK1 (Erk1/2) and transcription factors CREB1 or ATF1. This pathway contributes to CLDN1 and CLDN5 expression and tight junction formation between adjacent Sertoli cells. Mediates androgen-induced vascular endothelial cell proliferation through activation of an inhibitory G protein leading to the AKT1 and MAPK3/MAPK1 (Erk1/2) activation which in turn modulate inhibition (phosphorylation) of GSK3B and CCND1 transcription. Moreover, has dual functions as a membrane-bound androgen receptor and as an androgen-dependent zinc transporter both of which are mediated through an inhibitory G protein (Gi) that mediates both MAP kinase and zinc signaling leading to the androgen-dependent apoptotic process. In Rattus norvegicus (Rat), this protein is Zinc transporter ZIP9.